We begin with the raw amino-acid sequence, 846 residues long: Matrin-3 (846 aa).

Ser2 carries the N-acetylserine modification. Lys3 bears the N6-acetyllysine; alternate mark. A Glycyl lysine isopeptide (Lys-Gly) (interchain with G-Cter in SUMO2); alternate cross-link involves residue Lys3. Residues Ser4, Ser9, Ser14, Ser22, Ser41, Ser118, and Ser126 each carry the phosphoserine modification. Glycyl lysine isopeptide (Lys-Gly) (interchain with G-Cter in SUMO2) cross-links involve residues Lys132 and Lys146. 2 disordered regions span residues 147–174 (RRRT…YRVP) and 187–213 (DSFD…ESGY). At Thr150 the chain carries Phosphothreonine. Ser157 bears the Phosphoserine mark. The residue at position 158 (Tyr158) is a Phosphotyrosine. Positions 160-174 (RDGRSATREPPYRVP) are enriched in basic and acidic residues. Ser164, Ser188, and Ser195 each carry phosphoserine. Positions 201–213 (DYDHGSRSQESGY) are enriched in basic and acidic residues. Tyr202 carries the post-translational modification Phosphotyrosine. Ser206, Ser208, and Ser211 each carry phosphoserine. The residue at position 219 (Tyr219) is a Phosphotyrosine. The residue at position 234 (Ser234) is a Phosphoserine. Lys245 is covalently cross-linked (Glycyl lysine isopeptide (Lys-Gly) (interchain with G-Cter in SUMO2)). Position 264 is a phosphoserine (Ser264). Lys269 participates in a covalent cross-link: Glycyl lysine isopeptide (Lys-Gly) (interchain with G-Cter in SUMO2). At Ser275 the chain carries Phosphoserine. The tract at residues 342 to 394 (PFMLQQSTNPAPGILGPPPPSFHLGGPAVGPRGNLGAGNGNLQGPRHMQKGRV) is disordered. The 76-residue stretch at 398 to 473 (RVVHIMDFQR…KPVRVHLSQK (76 aa)) folds into the RRM 1 domain. Glycyl lysine isopeptide (Lys-Gly) (interchain with G-Cter in SUMO2) cross-links involve residues Lys478, Lys487, and Lys491. One can recognise an RRM 2 domain in the interval 496–571 (RVIHLSNLPH…RCVKVDLSEK (76 aa)). Residues Ser509 and Ser511 each carry the phosphoserine modification. Lys515 is covalently cross-linked (Glycyl lysine isopeptide (Lys-Gly) (interchain with G-Cter in SUMO2)). The residue at position 522 (Lys522) is an N6-acetyllysine; alternate. Residue Lys522 forms a Glycyl lysine isopeptide (Lys-Gly) (interchain with G-Cter in SUMO2); alternate linkage. Ser533 is subject to Phosphoserine. Residues Lys554 and Lys555 each participate in a glycyl lysine isopeptide (Lys-Gly) (interchain with G-Cter in SUMO2) cross-link. Lys571 carries the N6-acetyllysine modification. Residues 588–779 (KKDKSRKRSY…EDYTIPDEYR (192 aa)) form a disordered region. Phosphoserine occurs at positions 596, 598, 604, and 606. The span at 600-642 (DGKESPSDKKSKTDAQKTESPAEGKEQEEKSGEDGEKDTKDDQ) shows a compositional bias: basic and acidic residues. Residues Lys616 and Lys629 each participate in a glycyl lysine isopeptide (Lys-Gly) (interchain with G-Cter in SUMO2) cross-link. The span at 652–664 (ESEDELLVDEEEA) shows a compositional bias: acidic residues. Ser653, Ser670, Ser672, and Ser673 each carry phosphoserine. Residues 665–675 (AALLESGSSVG) show a composition bias toward low complexity. Thr678 carries the phosphothreonine modification. A Phosphoserine modification is found at Ser688. Residues 688 to 703 (SDGKKEPSDKAVKKDP) show a composition bias toward basic and acidic residues. A Nuclear localization signal motif is present at residues 709-717 (SKKKLKKVD). Residues Lys718 and Lys735 each participate in a glycyl lysine isopeptide (Lys-Gly) (interchain with G-Cter in SUMO2) cross-link. A Phosphothreonine modification is found at Thr740. Ser746 and Ser758 each carry phosphoserine. Residues 766–779 (DENKEDYTIPDEYR) show a composition bias toward basic and acidic residues. Lys769 is covalently cross-linked (Glycyl lysine isopeptide (Lys-Gly) (interchain with G-Cter in SUMO2)). The segment at 800-831 (FYCKLCSLFYTNEEVAKNTHCSSLPHYQKLKK) adopts a Matrin-type zinc-finger fold. Position 835 is an N6-acetyllysine; alternate (Lys835). Residue Lys835 forms a Glycyl lysine isopeptide (Lys-Gly) (interchain with G-Cter in SUMO2); alternate linkage.

In terms of assembly, part of a complex consisting of SFPQ, NONO and MATR3. Interacts with AGO1 and AGO2. Part of a complex composed at least of ASH2L, EMSY, HCFC1, HSPA8, CCAR2, MATR3, MKI67, RBBP5, TUBB2A, WDR5 and ZNF335; this complex may have a histone H3-specific methyltransferase activity. Interacts with TARDBP. Part of the HDP-RNP complex composed of at least HEXIM1, PRKDC, XRCC5, XRCC6, paraspeckle proteins (SFPQ, NONO, PSPC1, RBM14, and MATR3) and NEAT1 RNA. Interacts with FUS. Interacts with IGF2BP1. Interacts with IGF2BP2 and IGF2BP3. Interacts with RBPMS.

Its subcellular location is the nucleus matrix. Its function is as follows. May play a role in transcription or may interact with other nuclear matrix proteins to form the internal fibrogranular network. In association with the SFPQ-NONO heteromer may play a role in nuclear retention of defective RNAs. Plays a role in the regulation of DNA virus-mediated innate immune response by assembling into the HDP-RNP complex, a complex that serves as a platform for IRF3 phosphorylation and subsequent innate immune response activation through the cGAS-STING pathway. Binds to N6-methyladenosine (m6A)-containing mRNAs and contributes to MYC stability by binding to m6A-containing MYC mRNAs. May bind to specific miRNA hairpins. This chain is Matrin-3 (Matr3), found in Mus musculus (Mouse).